The primary structure comprises 98 residues: Large ribosomal subunit protein mL53 (98 aa).

This sequence belongs to the mitochondrion-specific ribosomal protein mL53 family. In terms of assembly, component of the mitochondrial large ribosomal subunit (mt-LSU). Mature yeast 74S mitochondrial ribosomes consist of a small (37S) and a large (54S) subunit. The 37S small subunit contains a 15S ribosomal RNA (15S mt-rRNA) and 34 different proteins. The 54S large subunit contains a 21S rRNA (21S mt-rRNA) and 46 different proteins.

It is found in the mitochondrion. Its function is as follows. Component of the mitochondrial ribosome (mitoribosome), a dedicated translation machinery responsible for the synthesis of mitochondrial genome-encoded proteins, including at least some of the essential transmembrane subunits of the mitochondrial respiratory chain. The mitoribosomes are attached to the mitochondrial inner membrane and translation products are cotranslationally integrated into the membrane. This chain is Large ribosomal subunit protein mL53 (MRPL44), found in Saccharomyces cerevisiae (strain ATCC 204508 / S288c) (Baker's yeast).